Here is a 217-residue protein sequence, read N- to C-terminus: Thymidylate kinase (217 aa).

7–14 (GIEGTGKT) lines the ATP pocket.

This sequence belongs to the thymidylate kinase family.

The catalysed reaction is dTMP + ATP = dTDP + ADP. Its function is as follows. Phosphorylation of dTMP to form dTDP in both de novo and salvage pathways of dTTP synthesis. The protein is Thymidylate kinase of Maridesulfovibrio salexigens (strain ATCC 14822 / DSM 2638 / NCIMB 8403 / VKM B-1763) (Desulfovibrio salexigens).